The chain runs to 76 residues: Small ribosomal subunit protein bS18 (76 aa).

The protein belongs to the bacterial ribosomal protein bS18 family. In terms of assembly, part of the 30S ribosomal subunit. Forms a tight heterodimer with protein bS6.

In terms of biological role, binds as a heterodimer with protein bS6 to the central domain of the 16S rRNA, where it helps stabilize the platform of the 30S subunit. In Petrotoga mobilis (strain DSM 10674 / SJ95), this protein is Small ribosomal subunit protein bS18.